Here is a 644-residue protein sequence, read N- to C-terminus: Probable potassium transport system protein Kup (644 aa).

The next 12 membrane-spanning stretches (helical) occupy residues 10–30 (GGATLPLMAMAALGVVFGDIG), 56–76 (ILSLIFWTLVLVVSVKYAWVI), 106–126 (WWILSIGLLGAALFYGDGVIT), 143–163 (PAWKPLVIPLALGVIIGLFMV), 175–195 (FGPSMLVWFLLLFGSGLTWIV), 212–232 (FFGIHGIGGLVILGAVVLAVT), 252–272 (AWYFLVLPALALNYLGQGALL), 282–302 (PFFMLFPAWATIPMVVISGIA), 343–363 (IYLPLLNWLLMVAVIVVILWF), 371–391 (FAYGTAVTGTMLMTTILVFFV), 403–423 (AGLFCGFFVLLDGVFFGANLL), and 425–445 (FVEGGWFPLAIGLAVFTTMST).

The protein belongs to the HAK/KUP transporter (TC 2.A.72) family.

The protein localises to the cell inner membrane. It catalyses the reaction K(+)(in) + H(+)(in) = K(+)(out) + H(+)(out). Transport of potassium into the cell. Likely operates as a K(+):H(+) symporter. In Acidithiobacillus ferrooxidans (strain ATCC 23270 / DSM 14882 / CIP 104768 / NCIMB 8455) (Ferrobacillus ferrooxidans (strain ATCC 23270)), this protein is Probable potassium transport system protein Kup.